The sequence spans 446 residues: Na(+)/H(+) antiporter NhaA (446 aa).

Transmembrane regions (helical) follow at residues 23–43, 73–93, 109–129, 138–158, 167–187, 193–213, 219–239, 314–334, 348–368, 381–401, and 419–439; these read GGML…SPWG, LMTF…GLEI, LLPI…YYFM, GLAI…SLFG, VFLT…IALF, SVNY…GNFF, WFYI…GIHA, MVNY…SLTA, VLAG…WLVI, WVNL…SLFI, and GVIL…QFAL.

This sequence belongs to the NhaA Na(+)/H(+) (TC 2.A.33) antiporter family.

It localises to the cell inner membrane. The enzyme catalyses Na(+)(in) + 2 H(+)(out) = Na(+)(out) + 2 H(+)(in). Functionally, na(+)/H(+) antiporter that extrudes sodium in exchange for external protons. This is Na(+)/H(+) antiporter NhaA from Phocaeicola vulgatus (strain ATCC 8482 / DSM 1447 / JCM 5826 / CCUG 4940 / NBRC 14291 / NCTC 11154) (Bacteroides vulgatus).